The sequence spans 315 residues: Tryptophan prenyltransferase ComQ (315 aa).

Residues aspartate 95 and aspartate 99 each contribute to the Mg(2+) site.

It belongs to the FPP/GGPP synthase family. Mg(2+) serves as cofactor.

It localises to the cell membrane. The enzyme catalyses L-tryptophyl-[protein] + (2E,6E)-farnesyl diphosphate = (2S,3R)-3-farnesyl-2,3-dihydro-2,N(alpha)-cyclo-L-tryptophyl-[protein] + diphosphate. In terms of biological role, part of a major quorum-sensing system that regulates the development of genetic competence. Involved in the maturation of the competence pheromone ComX. Acts by catalyzing the transfer of a farnesyl group on the ComX pheromone. In vitro, can also catalyze the farnesylation of single tryptophan and tryptophan derivatives. The polypeptide is Tryptophan prenyltransferase ComQ (Bacillus subtilis subsp. natto (strain BEST195)).